The chain runs to 80 residues: Small ribosomal subunit protein bS16 (80 aa).

This sequence belongs to the bacterial ribosomal protein bS16 family.

The sequence is that of Small ribosomal subunit protein bS16 from Hydrogenovibrio crunogenus (strain DSM 25203 / XCL-2) (Thiomicrospira crunogena).